We begin with the raw amino-acid sequence, 874 residues long: GRB2-associated and regulator of MAPK protein 2 (874 aa).

A CABIT region spans residues 12 to 339 (RWSMGAFPLD…LLAGDPRVER (328 aa)). A compositionally biased stretch (gly residues) spans 188-206 (GGGGPASAGAAGGTGGGGA). Disordered stretches follow at residues 188 to 207 (GGGG…GGAR), 388 to 422 (PGLA…EPAA), 437 to 545 (GPEG…SPSP), 563 to 598 (GESS…AASL), and 625 to 742 (APFG…PSKA). 2 stretches are compositionally biased toward low complexity: residues 388-403 (PGLA…APAG) and 518-545 (SPSS…SPSP). The span at 575-585 (PSTTQPSQASR) shows a compositional bias: polar residues. Composition is skewed to low complexity over residues 632–650 (PFSG…SSGP) and 658–691 (ATSG…SSSS). Serine 735 bears the Phosphoserine mark. The region spanning 807–871 (SALSLEEVSR…KIMQFIKGWR (65 aa)) is the SAM domain.

Belongs to the GAREM family.

In terms of biological role, probable adapter protein that may provide a link between cell surface epidermal growth factor receptor and the MAPK/ERK signaling pathway. This Homo sapiens (Human) protein is GRB2-associated and regulator of MAPK protein 2 (GAREM2).